The chain runs to 112 residues: MVATKKTKKSTDNINNKLQLVMKSGKYTLGYKTVLRTLRNSKSKLVIIANNCPPLRKSEIEYYAMLAKVTVHHFHGNNVDLGTACGKYFRVCCLSIIDPGDSDIIKTTPGEQ.

Belongs to the eukaryotic ribosomal protein eL30 family.

The polypeptide is Large ribosomal subunit protein eL30 (RPL30) (Zea mays (Maize)).